The primary structure comprises 258 residues: Triosephosphate isomerase (258 aa).

11–13 provides a ligand contact to substrate; it reads NWK. Catalysis depends on His-101, which acts as the Electrophile. The Proton acceptor role is filled by Glu-173. Residues Gly-179, Ser-219, and 240-241 each bind substrate; that span reads GG.

The protein belongs to the triosephosphate isomerase family. Homodimer.

The protein localises to the cytoplasm. It carries out the reaction D-glyceraldehyde 3-phosphate = dihydroxyacetone phosphate. The protein operates within carbohydrate biosynthesis; gluconeogenesis. It participates in carbohydrate degradation; glycolysis; D-glyceraldehyde 3-phosphate from glycerone phosphate: step 1/1. Involved in the gluconeogenesis. Catalyzes stereospecifically the conversion of dihydroxyacetone phosphate (DHAP) to D-glyceraldehyde-3-phosphate (G3P). In Streptomyces avermitilis (strain ATCC 31267 / DSM 46492 / JCM 5070 / NBRC 14893 / NCIMB 12804 / NRRL 8165 / MA-4680), this protein is Triosephosphate isomerase.